The primary structure comprises 109 residues: RNA-binding protein Hfq (109 aa).

A Sm domain is found at 9 to 68 (DPFLNALRKEKVSVSVYLVNGIKLQGQVEAFDQFCIVLRNTVNQMVYKHAISTIVPAKSV).

It belongs to the Hfq family. In terms of assembly, homohexamer.

Its function is as follows. RNA chaperone that binds small regulatory RNA (sRNAs) and mRNAs to facilitate mRNA translational regulation in response to envelope stress, environmental stress and changes in metabolite concentrations. Also binds with high specificity to tRNAs. In Francisella philomiragia subsp. philomiragia (strain ATCC 25017 / CCUG 19701 / FSC 153 / O#319-036), this protein is RNA-binding protein Hfq.